We begin with the raw amino-acid sequence, 348 residues long: Probable malate dehydrogenase 2, mitochondrial (348 aa).

Residues M1–F9 constitute a mitochondrion transit peptide. Residue G31–G37 coordinates NAD(+). Substrate contacts are provided by R112 and R118. NAD(+)-binding positions include N125, Q132, and V150 to N152. The substrate site is built by N152 and R183. The active-site Proton acceptor is the H208.

The protein belongs to the LDH/MDH superfamily. MDH type 2 family. As to quaternary structure, homodimer.

It localises to the mitochondrion. It carries out the reaction (S)-malate + NAD(+) = oxaloacetate + NADH + H(+). In terms of biological role, catalyzes the reversible oxidation of malate to oxaloacetate. This Dictyostelium discoideum (Social amoeba) protein is Probable malate dehydrogenase 2, mitochondrial (mdhB).